Consider the following 373-residue polypeptide: Outer membrane protein assembly factor BamC (373 aa).

Positions 1–16 (MLKQVTPLVLIAAVTA) are cleaved as a signal peptide. Residue C17 is the site of N-palmitoyl cysteine attachment. C17 carries S-diacylglycerol cysteine lipidation.

The protein belongs to the BamC family. Part of the Bam complex.

Its subcellular location is the cell outer membrane. Functionally, part of the outer membrane protein assembly complex, which is involved in assembly and insertion of beta-barrel proteins into the outer membrane. The sequence is that of Outer membrane protein assembly factor BamC from Shewanella sediminis (strain HAW-EB3).